A 231-amino-acid chain; its full sequence is ATP phosphoribosyltransferase (231 aa).

This sequence belongs to the ATP phosphoribosyltransferase family. Short subfamily. In terms of assembly, heteromultimer composed of HisG and HisZ subunits.

The protein localises to the cytoplasm. The enzyme catalyses 1-(5-phospho-beta-D-ribosyl)-ATP + diphosphate = 5-phospho-alpha-D-ribose 1-diphosphate + ATP. It functions in the pathway amino-acid biosynthesis; L-histidine biosynthesis; L-histidine from 5-phospho-alpha-D-ribose 1-diphosphate: step 1/9. Its function is as follows. Catalyzes the condensation of ATP and 5-phosphoribose 1-diphosphate to form N'-(5'-phosphoribosyl)-ATP (PR-ATP). Has a crucial role in the pathway because the rate of histidine biosynthesis seems to be controlled primarily by regulation of HisG enzymatic activity. The protein is ATP phosphoribosyltransferase (hisG) of Rhizobium meliloti (strain 1021) (Ensifer meliloti).